The sequence spans 337 residues: DNA replication regulator sld2 (337 aa).

2 positions are modified to phosphothreonine; by cdc2: Thr60 and Thr74. The tract at residues 71–97 is disordered; sequence KFQTPTKQRAETEANESPKAPRNDYLQ. Residue Ser87 is modified to Phosphoserine; by cdc2. 2 positions are modified to phosphothreonine; by cdc2: Thr99 and Thr154. Phosphoserine is present on Ser183. The disordered stretch occupies residues 258–302; the sequence is SMNLSKSHLEGLPEIDEDAENGIDDNEDTTASKDSSPFLDLQSER. Positions 270-285 are enriched in acidic residues; that stretch reads PEIDEDAENGIDDNED.

It belongs to the SLD2 family. In terms of assembly, interacts with rad4. In terms of processing, phosphorylated by cdc2 at the onset of S-phase.

It localises to the cytoplasm. It is found in the nucleus. In terms of biological role, has a role in the initiation of DNA replication. Required at S-phase checkpoint. The chain is DNA replication regulator sld2 (drc1) from Schizosaccharomyces pombe (strain 972 / ATCC 24843) (Fission yeast).